The following is a 566-amino-acid chain: Phenylalanine--tRNA ligase beta subunit (566 aa).

Positions tyrosine 287–proline 362 constitute a B5 domain. Mg(2+) contacts are provided by aspartate 340, aspartate 346, glutamate 349, and aspartate 350.

Belongs to the phenylalanyl-tRNA synthetase beta subunit family. Type 2 subfamily. As to quaternary structure, tetramer of two alpha and two beta subunits. The cofactor is Mg(2+).

Its subcellular location is the cytoplasm. It carries out the reaction tRNA(Phe) + L-phenylalanine + ATP = L-phenylalanyl-tRNA(Phe) + AMP + diphosphate + H(+). This chain is Phenylalanine--tRNA ligase beta subunit, found in Borreliella burgdorferi (strain ZS7) (Borrelia burgdorferi).